The primary structure comprises 427 residues: MSAIVDVIAREILDSRGNPTVEADVLLESGVLGRAAVPSGASVGTREAVELRDEDAQRYFGKGVLKAVENVNTEISEAIMGLDAMDQAFIDRTLIDLDGSGNKSRLGANAILSVSLAVAKAAAEECGLPLYRYVGGAGSMSMPVPMMNVINGGAHANNNIDMQEFVIIPLGAQSFREALRCGAEVFHTLKGLLDKRGMHTAVGDEGGFAPDLPNNEAALQLIVEAIENAGYLPGPDVAIGLDCAASEFYRDGKYHLESDGLALDSTQFADYLATWIDKYPIISIEDGMSEHDWDGWKLLTSRLGKSVQLVGDDIFVTNASILKEGVSQGIANSILIKLNQIGTLTEALYAIESAKRAGYTAVVSHRSGETEDTTIADIAVASNALQIKTGSLSRSDRLAKYNQLLRIEEDLGDTASYPGRGAFYQLK.

Gln-163 is a binding site for (2R)-2-phosphoglycerate. The active-site Proton donor is Glu-205. The Mg(2+) site is built by Asp-242, Glu-285, and Asp-312. (2R)-2-phosphoglycerate-binding residues include Lys-337, Arg-366, Ser-367, and Lys-388. Lys-337 acts as the Proton acceptor in catalysis.

The protein belongs to the enolase family. Mg(2+) serves as cofactor.

The protein localises to the cytoplasm. It localises to the secreted. The protein resides in the cell surface. The catalysed reaction is (2R)-2-phosphoglycerate = phosphoenolpyruvate + H2O. Its pathway is carbohydrate degradation; glycolysis; pyruvate from D-glyceraldehyde 3-phosphate: step 4/5. In terms of biological role, catalyzes the reversible conversion of 2-phosphoglycerate (2-PG) into phosphoenolpyruvate (PEP). It is essential for the degradation of carbohydrates via glycolysis. The sequence is that of Enolase from Nitrosospira multiformis (strain ATCC 25196 / NCIMB 11849 / C 71).